We begin with the raw amino-acid sequence, 210 residues long: Small ribosomal subunit protein uS7 (210 aa).

The span at 1 to 22 shows a compositional bias: acidic residues; that stretch reads MSDEQPAEDETEEAAAESEDTQ. Residues 1–23 are disordered; it reads MSDEQPAEDETEEAAAESEDTQE.

The protein belongs to the universal ribosomal protein uS7 family. As to quaternary structure, part of the 30S ribosomal subunit. Contacts proteins S9 and S11.

One of the primary rRNA binding proteins, it binds directly to 16S rRNA where it nucleates assembly of the head domain of the 30S subunit. Is located at the subunit interface close to the decoding center. This chain is Small ribosomal subunit protein uS7, found in Halobacterium salinarum (strain ATCC 29341 / DSM 671 / R1).